A 711-amino-acid chain; its full sequence is Denticleless protein homolog B (711 aa).

WD repeat units follow at residues 47–89, 96–135, and 138–178; these read GRAV…MQRL, AHTNAVFDIAWVPGEHKLVTASGDQTAKLWDVKAGELIGE, and GHQC…KDGF. The DDB1-binding motif signature appears at 168–171; it reads WDTR. The Nuclear localization signal motif lies at 197–204; it reads PSKVKKRK. WD repeat units lie at residues 215 to 254, 270 to 309, 314 to 355, and 359 to 398; these read DSQQSVTVVIFQDEYTVISAGAVDGVVKIWDLRKNYSTYR, TRKLGYSSLVLDPTGTNLFASCTDDNVYMFNATGLKTDPV, GHQN…AAPI, and GHCQEVTSVAWCQSDFTKIATCSDDNTVRIWRLNRSSEDS. Residues 244–247 carry the DDB1-binding motif motif; it reads WDLR. Disordered regions lie at residues 473–524 and 601–698; these read QTPK…AFTP and EFDQ…TPGS. 2 stretches are compositionally biased toward polar residues: residues 504 to 516 and 606 to 627; these read TPKSSKGTDSKTP and LSPSPSTSLHMNATDNPPTLSP. A compositionally biased stretch (basic and acidic residues) spans 631 to 642; the sequence is MKSDFVDKENSS. The segment covering 658–675 has biased composition (low complexity); it reads DNSSPQFKSSSSPSSRNS. Residues 684–697 are compositionally biased toward polar residues; sequence NAPNSPVSVPTTPG.

It belongs to the WD repeat cdt2 family. In terms of assembly, component of the DCX(DTL) E3 ubiquitin ligase complex, at least composed of cul4 (cul4a or cul4b), ddb1, dtl/cdt2 and rbx1.

It is found in the nucleus. The protein resides in the cytoplasm. The protein localises to the cytoskeleton. Its subcellular location is the microtubule organizing center. It localises to the centrosome. It is found in the chromosome. Its pathway is protein modification; protein ubiquitination. In terms of biological role, substrate-specific adapter of a DCX (DDB1-CUL4-X-box) E3 ubiquitin-protein ligase complex required for cell cycle control, DNA damage response and translesion DNA synthesis. The DCX(DTL) complex, also named CRL4(CDT2) complex, mediates the polyubiquitination and subsequent degradation of CDT1, CDKN1A/p21(CIP1), KMT5A and SDE2. CDT1 degradation in response to DNA damage is necessary to ensure proper cell cycle regulation of DNA replication. CDKN1A/p21(CIP1) degradation during S phase or following UV irradiation is essential to control replication licensing. KMT5A degradation is also important for a proper regulation of mechanisms such as TGF-beta signaling, cell cycle progression, DNA repair and cell migration. Most substrates require their interaction with PCNA for their polyubiquitination: substrates interact with PCNA via their PIP-box, and those containing the 'K+4' motif in the PIP box, recruit the DCX(DTL) complex, leading to their degradation. In undamaged proliferating cells, the DCX(DTL) complex also promotes the 'Lys-164' monoubiquitination of PCNA, thereby being involved in PCNA-dependent translesion DNA synthesis. May play a role in the regulation of the circadian clock. The sequence is that of Denticleless protein homolog B (dtl-b) from Xenopus laevis (African clawed frog).